The sequence spans 609 residues: UvrABC system protein C (609 aa).

Residues 16–94 (SSAGVYRMYD…IKQYMPKYNV (79 aa)) form the GIY-YIG domain. The UVR domain occupies 203–238 (KQVISELVAKMEEAAEQQAYEQAARFRDQIMALRRV).

Belongs to the UvrC family. In terms of assembly, interacts with UvrB in an incision complex.

It is found in the cytoplasm. The UvrABC repair system catalyzes the recognition and processing of DNA lesions. UvrC both incises the 5' and 3' sides of the lesion. The N-terminal half is responsible for the 3' incision and the C-terminal half is responsible for the 5' incision. The chain is UvrABC system protein C from Shewanella oneidensis (strain ATCC 700550 / JCM 31522 / CIP 106686 / LMG 19005 / NCIMB 14063 / MR-1).